A 132-amino-acid polypeptide reads, in one-letter code: MVMTDPIADMLTRIRNANLVRHEKLELPASMLKKEIADILKREGFIRDYEFIEDNKQGVIRIFLKYGPSNERVITGLKRISKPGLRVYAKSTELPRVLGGLGIALVSTSKGVLTDKEARQQQVGGEVLAYVW.

Belongs to the universal ribosomal protein uS8 family. In terms of assembly, part of the 30S ribosomal subunit. Contacts proteins S5 and S12.

In terms of biological role, one of the primary rRNA binding proteins, it binds directly to 16S rRNA central domain where it helps coordinate assembly of the platform of the 30S subunit. The chain is Small ribosomal subunit protein uS8 from Shouchella clausii (strain KSM-K16) (Alkalihalobacillus clausii).